A 2344-amino-acid chain; its full sequence is Genome polyprotein (2344 aa).

In terms of domain architecture, SF3 helicase spans 492–653 (QKVISDLHTM…ESWQATRHGS (162 aa)). 522-529 (GAPGIGKT) contacts ATP. An O-(5'-phospho-RNA)-tyrosine modification is found at Y1014. Position 1014 is an O-UMP-tyrosine; transient (Y1014). The region spanning 1109-1244 (GLPGFMRHNG…SKMCTLIDLT (136 aa)) is the Peptidase C24 domain. Active-site for 3CLpro activity residues include H1135, D1152, and C1212. The RdRp catalytic domain occupies 1495–1619 (SDFLCLDYSK…AMTPMMVSLL (125 aa)). C1584 and C1591 are disulfide-bonded. The disordered stretch occupies residues 1771-1796 (RTAPQGEAAGTATTASVPGTTTDGMD). Low complexity predominate over residues 1778–1794 (AAGTATTASVPGTTTDG).

Homodimer. As to quaternary structure, homomultimer. Interacts with host type II histo-blood group structures antigens at the surface of target cells. The cofactor is Mn(2+). Specific enzymatic cleavages by its own cysteine protease yield mature proteins. The protease cleaves itself from the nascent polyprotein autocatalytically. Precursor p41 can be cleaved by viral 3CLpro into protein p19 and VPg, or cleaved by host protease into protein p23/2 and protein p18. Post-translationally, VPg is uridylylated by the polymerase and is covalently attached to the 5'-end of the polyadenylated genomic and subgenomic RNAs. This uridylylated form acts as a nucleotide-peptide primer for the polymerase.

The protein resides in the host cytoplasm. Its subcellular location is the host endoplasmic reticulum. It localises to the virion. The catalysed reaction is a ribonucleoside 5'-triphosphate + H2O = a ribonucleoside 5'-diphosphate + phosphate + H(+). It catalyses the reaction Endopeptidase with a preference for cleavage when the P1 position is occupied by Glu-|-Xaa and the P1' position is occupied by Gly-|-Yaa.. The enzyme catalyses RNA(n) + a ribonucleoside 5'-triphosphate = RNA(n+1) + diphosphate. Functionally, together with NTPase and NS4, initiates the formation of the replication complex. Induces the proliferation of the host smooth ER membranes forming long tubular structures. These remodeled membranes probably form the viral factories that contain the replication complex. In terms of biological role, displays NTPase activity, but no helicase activity. Induces the formation of convoluted membranes derived from the host ER. These remodeled membranes probably form the viral factories that contain the replication complex. Together with NS2 and NS4, initiates the formation of the replication complex. Probable key protein responsible for the formation of membrane alterations by the virus. Induces the formation of convoluted membranes derived from the host ER. These remodeled membranes probably form the viral factories that contain the replication complex. Together with NS2 and NTPase, initiates the formation of the replication complex. Its function is as follows. Viral genome-linked protein is covalently linked to the 5'-end of the positive-strand, negative-strand genomic RNAs and subgenomic RNA. Acts as a genome-linked replication primer. May recruit ribosome to viral RNA thereby promoting viral proteins translation. Interacts with host translation initiation complex to allow the translation of viral proteins. Functionally, processes the polyprotein. 3CLpro-RdRp is first released by autocleavage, then all other proteins are cleaved. May cleave polyadenylate-binding protein thereby inhibiting cellular translation. In terms of biological role, replicates genomic and antigenomic RNA by recognizing replications specific signals. Also transcribes a subgenomic mRNA by initiating RNA synthesis internally on antigenomic RNA. This sgRNA codes for structural proteins. Catalyzes the covalent attachment VPg with viral RNAs. Capsid protein VP60 self assembles to form an icosahedral capsid with a T=3 symmetry, about 35 nm in diameter, and consisting of 180 capsid proteins. A smaller form of capsid with a diameter of 23 nm might be capsid proteins assembled as icosahedron with T=1 symmetry. The capsid encapsulate VP2 proteins and genomic or subgenomic RNA. Attaches virion to target cells by binding histo-blood group antigens, inducing endocytosis of the viral particle. Acidification of the endosome induces conformational change of capsid protein thereby injecting virus genomic RNA into host cytoplasm. The sequence is that of Genome polyprotein from Rabbit hemorrhagic disease virus (strain SD) (Ra/LV/RHDV/SD/1989/FR).